Reading from the N-terminus, the 699-residue chain is Ferric reduction oxidase 4 (699 aa).

At 1–9 (MGNMRSLVK) the chain is on the cytoplasmic side. The helical transmembrane segment at 10-29 (TLMVVLFLGWILVWIMISTN) threads the bilayer. At 30 to 54 (LFKSKWTPKLSKYLNTTYFGPQGTN) the chain is on the lumenal side. Residues 55–73 (LVLLTVPMMFIAVLSCVYL) traverse the membrane as a helical segment. The Cytoplasmic segment spans residues 74–101 (HIQKKPTQPQREWKLKRIMGRVIMVMNP). The helical transmembrane segment at 102–125 (LGIVTATELTFSLLFVALLAWSLY) threads the bilayer. Residues 126–190 (NYLYLSYHVH…VGLTSESSIK (65 aa)) lie on the Lumenal side of the membrane. Positions 157–275 (GYVGNICWAF…HHLYGLYIVF (119 aa)) constitute a Ferric oxidoreductase domain. A helical membrane pass occupies residues 191 to 214 (YHIWLGHVSNFCFLVHTVVFLIYW). His192 and His206 together coordinate heme. Residues 215–264 (AMINKLMETFAWNPTYVPNLAGTIAMVIGIAMWVTSLPSFRRKKFEIFFY) are Cytoplasmic-facing. A helical membrane pass occupies residues 265–289 (THHLYGLYIVFYVIHVGDSWFCMIL). The heme site is built by His266 and His279. Residues 290-311 (PNIFLFFIDRYLRFLQSTKRSR) are Lumenal-facing. The FAD-binding FR-type domain occupies 305–408 (QSTKRSRLVS…EGPYGPNSFD (104 aa)). A helical transmembrane segment spans residues 312 to 332 (LVSARILPSDNLELTFSKTPG). Topologically, residues 333–525 (LHYTPTSILF…PISPVLGPNN (193 aa)) are cytoplasmic. 354–357 (HPFT) provides a ligand contact to FAD. Residue 400–403 (GPYG) coordinates NAD(+). Residues 526-548 (FLWLGVVILSSFVMFLLLIGIVT) traverse the membrane as a helical segment. The Lumenal segment spans residues 549–568 (RYYIYPVDHNTGSIYNFSYR). A helical membrane pass occupies residues 569–590 (GLWDMFLGSACIFISSSVVFLW). Residues 591–699 (RKKQNKEGDK…LHFEAISFNW (109 aa)) are Cytoplasmic-facing.

It belongs to the ferric reductase (FRE) family. FAD is required as a cofactor. Expressed in siliques. Detected at low levels in roots, cotyledon veins and shoots.

It is found in the membrane. The catalysed reaction is 2 a Fe(II)-siderophore + NAD(+) + H(+) = 2 a Fe(III)-siderophore + NADH. Ferric chelate reductase. May participate in the transport of electrons to a Fe(3+) ion via FAD and heme intermediates. May function as root surface cupric chelate reductase and participate in the reduction of Cu(2+), for Cu(+) acquisition via Cu(+) transporters in response to copper deficiency. The protein is Ferric reduction oxidase 4 (FRO4) of Arabidopsis thaliana (Mouse-ear cress).